The following is a 150-amino-acid chain: 3-hydroxyacyl-[acyl-carrier-protein] dehydratase FabZ (150 aa).

Residue histidine 56 is part of the active site.

This sequence belongs to the thioester dehydratase family. FabZ subfamily.

It localises to the cytoplasm. It carries out the reaction a (3R)-hydroxyacyl-[ACP] = a (2E)-enoyl-[ACP] + H2O. In terms of biological role, involved in unsaturated fatty acids biosynthesis. Catalyzes the dehydration of short chain beta-hydroxyacyl-ACPs and long chain saturated and unsaturated beta-hydroxyacyl-ACPs. The chain is 3-hydroxyacyl-[acyl-carrier-protein] dehydratase FabZ from Desulfotalea psychrophila (strain LSv54 / DSM 12343).